The chain runs to 105 residues: Met repressor (105 aa).

Belongs to the MetJ family. Homodimer.

The protein resides in the cytoplasm. In terms of biological role, this regulatory protein, when combined with SAM (S-adenosylmethionine) represses the expression of the methionine regulon and of enzymes involved in SAM synthesis. The polypeptide is Met repressor (Sodalis glossinidius (strain morsitans)).